The primary structure comprises 3021 residues: Genome polyprotein (3021 aa).

The residue at position 2 (Ser2) is an N-acetylserine; by host. Residues 2–23 are interaction with STAT1; the sequence is STLPKPQRKTKRNTIRRPQDVK. Positions 2–58 are interaction with EIF2AK2/PKR; that stretch reads STLPKPQRKTKRNTIRRPQDVKFPGGGVIYVGVYVLPRRGPRLGVRATRKTSERSQP. Residues 2 to 59 form an interaction with DDX3X region; sequence STLPKPQRKTKRNTIRRPQDVKFPGGGVIYVGVYVLPRRGPRLGVRATRKTSERSQPR. The tract at residues 2–75 is disordered; it reads STLPKPQRKT…PKARRSEGRS (74 aa). Over 2–168 the chain is Cytoplasmic; the sequence is STLPKPQRKT…EDGINFATGN (167 aa). 2 consecutive short sequence motifs (nuclear localization signal) follow at residues 5-13 and 38-43; these read PKPQRKTKR and PRRGPR. Basic residues predominate over residues 7–16; the sequence is PQRKTKRNTI. The residue at position 53 (Ser53) is a Phosphoserine; by host. 2 short sequence motifs (nuclear localization signal) span residues 58 to 64 and 66 to 71; these read PRGRRKP and PKARRS. Positions 58–68 are enriched in basic residues; that stretch reads PRGRRKPIPKA. Phosphoserine; by host is present on residues Ser99 and Ser116. The tract at residues 112-152 is important for endoplasmic reticulum and mitochondrial localization; sequence PRRRSRNLGKVIDTLTCGFADLMGYIPLVGAPLGGAARALA. Residues 122–173 are interaction with APOA2; the sequence is VIDTLTCGFADLMGYIPLVGAPLGGAARALAHGVRALEDGINFATGNLPGCS. Residues 164 to 167 form an important for lipid droplets localization region; that stretch reads FATG. The chain crosses the membrane as a helical span at residues 169–189; sequence LPGCSFSIFLLALFSCLIHPA. Positions 178-191 are cleaved as a propeptide — ER anchor for the core protein, removed in mature form by host signal peptidase; that stretch reads LLALFSCLIHPAAS. The Lumenal portion of the chain corresponds to 190-358; that stretch reads ASLEWRNTSG…AGAHWGIIAG (169 aa). N-linked (GlcNAc...) asparagine; by host glycosylation is found at Asn196, Asn209, and Asn234. The important for fusion stretch occupies residues 265 to 296; that stretch reads LVGAGTMCSALYVGDMCGPVFLVGQAFTFRPR. A glycan (N-linked (GlcNAc...) asparagine; by host) is linked at Asn305. The helical transmembrane segment at 359–379 threads the bilayer; sequence LAYYSMQGNWAKVAIIMVMFS. Residues 380 to 731 lie on the Lumenal side of the membrane; it reads GVDASTHVTA…WEFVILIFLL (352 aa). Residues 385–412 are HVR1; sequence THVTAGQAARNAYGITSLFSVGAKQNLQ. N-linked (GlcNAc...) (high mannose) asparagine; by host glycans are attached at residues Asn417, Asn423, and Asn430. 4 cysteine pairs are disulfide-bonded: Cys429/Cys553, Cys452/Cys459, Cys487/Cys495, and Cys504/Cys509. Residue Asn448 is glycosylated (N-linked (GlcNAc...) asparagine; by host). Residues 475–479 form an HVR2 region; that stretch reads ANITG. Asn476 carries N-linked (GlcNAc...) asparagine; by host glycosylation. Residues 481-494 are CD81-binding 1; that stretch reads SDDKPYCWHYAPRP. The N-linked (GlcNAc...) asparagine; by host glycan is linked to Asn533. Residues 545–552 form a CD81-binding 2 region; it reads PPSGRWFG. An N-linked (GlcNAc...) asparagine; by host glycan is attached at Asn557. 4 disulfide bridges follow: Cys565/Cys570, Cys587/Cys591, Cys603/Cys626, and Cys613/Cys650. Asn629 and Asn651 each carry an N-linked (GlcNAc...) (high mannose) asparagine; by host glycan. Cysteines 658 and 683 form a disulfide. Positions 666-677 are PKR/eIF2-alpha phosphorylation homology domain (PePHD); that stretch reads SEQHPLLHSTTE. A helical transmembrane segment spans residues 732–752; it reads LADARVCVALWLILTISQAEA. Residues 753-763 lie on the Lumenal side of the membrane; it reads ALENLVTLNAV. A helical transmembrane segment spans residues 764 to 784; it reads AAAGTHGIGWYLVAFCAAWYV. Residues 785 to 787 lie on the Cytoplasmic side of the membrane; it reads RGK. Residues 788–809 traverse the membrane as a helical segment; it reads LVPLVTYSLTGLWSLALLVLLL. Residues 810-819 are Lumenal-facing; it reads PQRAYAWSGE. The chain crosses the membrane as a helical span at residues 820–840; it reads DSATLGAGILVLFGFFTLSPW. The Cytoplasmic segment spans residues 841 to 844; the sequence is YKHW. Residues 845–864 traverse the membrane as a helical segment; the sequence is IARLIWWNQYTICRCESALH. The Lumenal portion of the chain corresponds to 865-887; that stretch reads VWVPPLLARGGRDGVILLTSLLY. The helical transmembrane segment at 888–908 threads the bilayer; the sequence is PSLIFDITKLLIAALGPLYLI. Residues 905–1032 form the Peptidase C18 domain; it reads LYLIQATITA…DYREMGWRLL (128 aa). Residues 909 to 1663 are Cytoplasmic-facing; the sequence is QATITATPYF…CMSADLEVTT (755 aa). The protease NS2-3 stretch occupies residues 910–1212; sequence ATITATPYFV…PVETLSTQAR (303 aa). Cys928 carries S-palmitoyl cysteine; by host lipidation. The interval 935–955 is interaction with host SCPS1; sequence MGGKYFQMIILSLADGSNTYL. Active-site for protease NS2 activity; shared with dimeric partner residues include His958, Glu978, and Cys999. Positions 1033 to 1214 constitute a Peptidase S29 domain; it reads APITAYAQQT…ETLSTQARSP (182 aa). Residues His1089 and Asp1113 each act as charge relay system; for serine protease NS3 activity in the active site. Cys1129 and Cys1131 together coordinate Zn(2+). The Charge relay system; for serine protease NS3 activity role is filled by Ser1171. Zn(2+) is bound by residues Cys1177 and His1181. The Helicase ATP-binding domain maps to 1223-1375; that stretch reads PAVPQSYQVG…SNIEEVALGS (153 aa). 1236-1243 serves as a coordination point for ATP; sequence APTGSGKS. Ser1243 contributes to the Mg(2+) binding site. Positions 1322-1325 match the DECH box motif; that stretch reads DDCH. The 163-residue stretch at 1382–1544 folds into the Helicase C-terminal domain; the sequence is YGKAIPIACI…DLQPAETTVR (163 aa). Positions 1492–1504 are RNA-binding; it reads QRRGRTGRGRLGT. The helical transmembrane segment at 1664–1684 threads the bilayer; the sequence is STWVLLGGVLAAVAAYCLSVG. Residues 1685–1696 are NS3-binding; it reads CVVIVGHIELGG. The Cytoplasmic portion of the chain corresponds to 1685 to 1811; sequence CVVIVGHIEL…SVTSPLTTNQ (127 aa). A helical membrane pass occupies residues 1812–1830; it reads TMFFNILGGWVATHLAGPQ. Topologically, residues 1831–1834 are lumenal; the sequence is ASSA. The helical transmembrane segment at 1835 to 1855 threads the bilayer; that stretch reads FVVSGLAGAAIGGIGLGRVLL. A topological domain (cytoplasmic) is located at residue Asp1856. A helical membrane pass occupies residues 1857 to 1877; the sequence is ILAGYGAGVSGALVAFKIMGG. The Lumenal segment spans residues 1878 to 1887; sequence EPPTTEDMVN. Residues 1888–1908 traverse the membrane as a helical segment; that stretch reads LLPAILSPGALVVGVICAAIL. Topologically, residues 1909 to 1978 are cytoplasmic; sequence RRHVGPGEGP…WINEDYPSPC (70 aa). Cys1978 carries the S-palmitoyl cysteine; by host lipid modification. An intramembrane segment occupies 1979-2008; the sequence is SGDWLRIIWDWVCSVVSDFKTWLSAKIMPA. At 2009-3000 the chain is on the cytoplasmic side; it reads LPGLPFISCQ…YHSVSRARTR (992 aa). Zn(2+) is bound by residues Cys2017, Cys2035, Cys2037, and Cys2058. The tract at residues 2126–2214 is FKBP8-binding; it reads EFFTEVDGVR…ASSSASQLSA (89 aa). The segment at 2126 to 2338 is transcriptional activation; sequence EFFTEVDGVR…PVPPPRRKRT (213 aa). The segment at 2141–2145 is interaction with non-structural protein 4A; the sequence is PPCRP. Residues 2193–2215 are disordered; it reads ARRLARGSPPSEASSSASQLSAP. Positions 2195 to 2448 are interaction with host SKP2; it reads RLARGSPPSE…ALITPCSAEE (254 aa). 6 positions are modified to phosphoserine; by host: Ser2200, Ser2203, Ser2207, Ser2210, Ser2213, and Ser2216. Low complexity predominate over residues 2200 to 2215; the sequence is SPPSEASSSASQLSAP. The ISDR stretch occupies residues 2216–2255; that stretch reads SLKATCQTHRPHPDAELVDANLLWRQEMGSNITRVESETK. The interaction with EIF2AK2/PKR stretch occupies residues 2216–2281; the sequence is SLKATCQTHR…AELSAAAECF (66 aa). The tract at residues 2255 to 2312 is NS4B-binding; sequence KVVILDSFEPLRAETDDAELSAAAECFKKPPKYPPALPIWARPDYNPPLLDRWKSPDY. The segment at 2305 to 2383 is V3; that stretch reads DRWKSPDYVP…DTQSSTASKV (79 aa). 2 disordered regions span residues 2318 to 2338 and 2356 to 2419; these read HGCALPPKGAPPVPPPRRKRT and KSFP…WSTV. An SH3-binding motif is present at residues 2328–2331; sequence PPVP. The Nuclear localization signal signature appears at 2333-2341; that stretch reads PRRKRTIQL. A Glycyl lysine isopeptide (Lys-Gly) (interchain with G-Cter in ubiquitin) cross-link involves residue Lys2356. Positions 2359-2381 are enriched in low complexity; that stretch reads PSSKPQEENSSSSGVDTQSSTAS. 2 positions are modified to phosphoserine; by host: Ser2459 and Ser2472. Residues 2644 to 2762 form the RdRp catalytic domain; it reads PLGFSYDTRC…VAESDGVDED (119 aa). Residues Asp2650, Asp2748, and Asp2749 each contribute to the Mg(2+) site. The chain crosses the membrane as a helical span at residues 3001 to 3021; that stretch reads YLLLCLLLLTVGVGIFLLPAR.

Belongs to the hepacivirus polyprotein family. As to quaternary structure, homooligomer. Interacts with E1 (via C-terminus). Interacts with the non-structural protein 5A. Interacts (via N-terminus) with host STAT1 (via SH2 domain); this interaction results in decreased STAT1 phosphorylation and ubiquitin-mediated proteasome-dependent STAT1 degradation, leading to decreased IFN-stimulated gene transcription. Interacts with host STAT3; this interaction constitutively activates STAT3. Interacts with host LTBR receptor. Interacts with host TNFRSF1A receptor and possibly induces apoptosis. Interacts with host HNRPK. Interacts with host YWHAE. Interacts with host UBE3A/E6AP. Interacts with host DDX3X. Interacts with host APOA2. Interacts with host RXRA protein. Interacts with host SP110 isoform 3/Sp110b; this interaction sequesters the transcriptional corepressor SP110 away from the nucleus. Interacts with host CREB3 nuclear transcription protein; this interaction triggers cell transformation. Interacts with host ACY3. Interacts with host C1QR1. Interacts with host RBM24; this interaction, which enhances the interaction of the mature core protein with 5'-UTR, may inhibit viral translation and favor replication. Interacts with host EIF2AK2/PKR; this interaction induces the autophosphorylation of EIF2AK2. Part of the viral assembly initiation complex composed of NS2, E1, E2, NS3, NS4A, NS5A and the mature core protein. In terms of assembly, forms a heterodimer with envelope glycoprotein E2. Interacts with mature core protein. Interacts with protease NS2. The heterodimer E1/E2 interacts with host CLDN1; this interaction plays a role in viral entry into host cell. Interacts with host SPSB2 (via C-terminus). Part of the viral assembly initiation complex composed of NS2, E1, E2, NS3, NS4A, NS5A and the mature core protein. Interacts with host NEURL3; this interaction prevents E1 binding to glycoprotein E2. Forms a heterodimer with envelope glycoprotein E1. Interacts with host CD81 and SCARB1 receptors; these interactions play a role in viral entry into host cell. Interacts with host EIF2AK2/PKR; this interaction inhibits EIF2AK2 and probably allows the virus to evade the innate immune response. Interacts with host CD209/DC-SIGN and CLEC4M/DC-SIGNR. Interact with host SPCS1; this interaction is essential for viral particle assembly. Interacts with protease NS2. The heterodimer E1/E2 interacts with host CLDN1; this interaction plays a role in viral entry into host cell. Part of the viral assembly initiation complex composed of NS2, E1, E2, NS3, NS4A, NS5A and the mature core protein. Interacts with host SLC3A2/4F2hc; the interaction may facilitate viral entry into host cell. Interacts with human PLSCR1. As to quaternary structure, homohexamer. Homoheptamer. Interacts with protease NS2. In terms of assembly, homodimer. Interacts with host SPCS1; this interaction is essential for viral particle assembly. Interacts with envelope glycoprotein E1. Interacts with envelope glycoprotein E2. Interacts with viroporin p7. Interacts with serine protease/helicase NS3. Part of the replication complex composed of NS2, NS3, NS4A, NS4B, NS5A and the RNA-directed RNA polymerase embedded in an ER-derived membranous web. Part of the viral assembly initiation complex composed of NS2, E1, E2, NS3, NS4A, NS5A and the mature core protein. Interacts with protease NS2. Interacts with non-structural protein 4A; this interaction stabilizes the folding of NS3 serine protease. NS3-NS4A interaction is essential for NS3 activation and allows membrane anchorage of the latter. NS3/NS4A complex also prevents phosphorylation of host IRF3, thus preventing the establishment of dsRNA induced antiviral state. Interacts with host MAVS; this interaction leads to the cleavage and inhibition of host MAVS. Interacts with host TICAM1; this interaction leads to the cleavage and inhibition of host TICAM1. Interacts with host TANK-binding kinase/TBK1; this interaction results in the inhibition of the association between TBK1 and IRF3, which leads to the inhibition of IRF3 activation. Interacts with host RBM24. Part of the replication complex composed of NS2, NS3, NS4A, NS4B, NS5A and the RNA-directed RNA polymerase embedded in an ER-derived membranous web. Part of the viral assembly initiation complex composed of NS2, E1, E2, NS3, NS4A, NS5A and the mature core protein. As to quaternary structure, interacts with NS3 serine protease; this interaction stabilizes the folding of NS3 serine protease. NS3-NS4A interaction is essential for NS3 activation and allows membrane anchorage of the latter. Interacts with non-structural protein 5A (via N-terminus). Part of the replication complex composed of NS2, NS3, NS4A, NS4B, NS5A and the RNA-directed RNA polymerase embedded in an ER-derived membranous web. Part of the viral assembly initiation complex composed of NS2, E1, E2, NS3, NS4A, NS5A and the mature core protein. In terms of assembly, homomultimer. Interacts with non-structural protein NS5A. Interacts with host PLA2G4C; this interaction likely initiates the recruitment of replication complexes to lipid droplets. Interacts with host STING; this interaction disrupts the interaction between STING and TBK1 thereby suppressing the interferon signaling. Part of the replication complex composed of NS2, NS3, NS4A, NS4B, NS5A and the RNA-directed RNA polymerase embedded in an ER-derived membranous web. Monomer. Homodimer; dimerization is required for RNA-binding. Interacts with the mature core protein. Interacts (via N-terminus) with non-structural protein 4A. Interacts with non-structural protein 4B. Interacts (via region D2) with RNA-directed RNA polymerase. Part of the viral assembly initiation complex composed of NS2, E1, E2, NS3, NS4A, NS5A and the mature core protein. Part of the replication complex composed of NS2, NS3, NS4A, NS4B, NS5A and the RNA-directed RNA polymerase embedded in an ER-derived membranous web. Interacts with host GRB2. Interacts with host BIN1. Interacts with host PIK3R1. Interacts with host SRCAP. Interacts with host FKBP8. Interacts (via C-terminus) with host VAPB (via MSP domain). Interacts with host EIF2AK2/PKR; this interaction leads to disruption of EIF2AK2 dimerization by NS5A and probably allows the virus to evade the innate immune response. Interacts (via N-terminus) with host PACSIN2 (via N-terminus); this interaction attenuates protein kinase C alpha-mediated phosphorylation of PACSIN2 by disrupting the interaction between PACSIN2 and PRKCA. Interacts (via N-terminus) with host SRC kinase (via SH2 domain). Interacts with most Src-family kinases. Interacts with host IFI27 and SKP2; promotes the ubiquitin-mediated proteasomal degradation of NS5A. Interacts with host GPS2. Interacts with host TNFRSF21; this interaction allows the modulation by the virus of JNK, p38 MAPK, STAT3, and Akt signaling pathways in a DR6-dependent manner. Interacts (via N-terminus) with host CIDEB (via N-terminus); this interaction seems to regulate the association of HCV particles with APOE. Interacts with host CHKA/Choline Kinase-alpha; CHKA bridges host PI4KA and NS5A and potentiates NS5A-stimulated PI4KA activity, which then facilitates the targeting of the ternary complex to the ER for viral replication. Interacts with host SPSB2 (via C-terminus); this interaction targets NS5A for ubiquitination and degradation. Interacts with host RAB18; this interaction may promote the association of NS5A and other replicase components with lipid droplets. Interacts (via region D2) with host PPIA/CYPA; the interaction stimulates RNA-binding ability of NS5A and is dependent on the peptidyl-prolyl cis-trans isomerase activity of PPIA/CYPA. Interacts with host TRIM14; this interaction induces the degradation of NS5A. As to quaternary structure, homooligomer. Interacts with non-structural protein 5A. Interacts with host VAPB. Interacts with host PRK2/PKN2. Interacts with host HNRNPA1 and SEPT6; these interactions facilitate viral replication. Part of the replication complex composed of NS2, NS3, NS4A, NS4B, NS5A and the RNA-directed RNA polymerase. Requires Zn(2+) as cofactor. The cofactor is Mg(2+). Post-translationally, specific enzymatic cleavages in vivo yield mature proteins. The structural proteins, core, E1, E2 and p7 are produced by proteolytic processing by host signal peptidases. The core protein precursor is synthesized as a 23 kDa, which is retained in the ER membrane through the hydrophobic signal peptide. Cleavage by the signal peptidase releases the 21 kDa mature core protein. The cleavage of the core protein precursor occurs between aminoacids 176 and 188 but the exact cleavage site is not known. Some degraded forms of the core protein appear as well during the course of infection. The other proteins (p7, NS2, NS3, NS4A, NS4B, NS5A and NS5B) are cleaved by the viral proteases. Autoprocessing between NS2 and NS3 is mediated by the NS2 cysteine protease catalytic domain and regulated by the NS3 N-terminal domain. Phosphorylated by host PKC and PKA. In terms of processing, ubiquitinated; mediated by UBE3A and leading to core protein subsequent proteasomal degradation. Post-translationally, highly N-glycosylated. Palmitoylation is required for NS2/3 autoprocessing and E2 recruitment to membranes. In terms of processing, palmitoylated. This modification may play a role in its polymerization or in protein-protein interactions. Post-translationally, phosphorylated on serines in a basal form termed p56. p58 is a hyperphosphorylated form of p56. p56 and p58 coexist in the cell in roughly equivalent amounts. Hyperphosphorylation is dependent on the presence of NS4A. Host CSNK1A1/CKI-alpha or RPS6KB1 kinases may be responsible for NS5A phosphorylation. Tyrosine phosphorylation is essential for the interaction with host SRC. In terms of processing, ubiquitinated. Ubiquitination, most probably at Lys-2356, mediated by host IFI27 and SKP2 leads to proteasomal degradation, restricting viral infection. Ubiquitination by host TRIM22 leads to interruption of viral replication. Post-translationally, the N-terminus is phosphorylated by host PRK2/PKN2.

It is found in the host endoplasmic reticulum membrane. It localises to the host mitochondrion membrane. The protein resides in the virion. The protein localises to the host cytoplasm. Its subcellular location is the host nucleus. It is found in the host lipid droplet. It localises to the virion membrane. The protein resides in the host mitochondrion. The protein localises to the host cell membrane. Its subcellular location is the host perinuclear region. It carries out the reaction Hydrolysis of four peptide bonds in the viral precursor polyprotein, commonly with Asp or Glu in the P6 position, Cys or Thr in P1 and Ser or Ala in P1'.. The enzyme catalyses a ribonucleoside 5'-triphosphate + H2O = a ribonucleoside 5'-diphosphate + phosphate + H(+). The catalysed reaction is ATP + H2O = ADP + phosphate + H(+). It catalyses the reaction RNA(n) + a ribonucleoside 5'-triphosphate = RNA(n+1) + diphosphate. Inhibited by the antiviral drug hexamethylene amiloride. Inhibition by amantadine appears to be genotype-dependent. Also inhibited by long-alkyl-chain iminosugar derivatives. Its activity is regulated as follows. Activity is up-regulated by PRK2/PKN2-mediated phosphorylation. Its function is as follows. Packages viral RNA to form a viral nucleocapsid, and promotes virion budding. Participates in the viral particle production as a result of its interaction with the non-structural protein 5A. Binds RNA and may function as a RNA chaperone to induce the RNA structural rearrangements taking place during virus replication. Modulates viral translation initiation by interacting with viral IRES and 40S ribosomal subunit. Affects various cell signaling pathways, host immunity and lipid metabolism. Prevents the establishment of cellular antiviral state by blocking the interferon-alpha/beta (IFN-alpha/beta) and IFN-gamma signaling pathways and by blocking the formation of phosphorylated STAT1 and promoting ubiquitin-mediated proteasome-dependent degradation of STAT1. Activates STAT3 leading to cellular transformation. Regulates the activity of cellular genes, including c-myc and c-fos. May repress the promoter of p53, and sequester CREB3 and SP110 isoform 3/Sp110b in the cytoplasm. Represses cell cycle negative regulating factor CDKN1A, thereby interrupting an important check point of normal cell cycle regulation. Targets transcription factors involved in the regulation of inflammatory responses and in the immune response: suppresses TNF-induced NF-kappa-B activation, and activates AP-1. Binds to dendritic cells (DCs) via C1QR1, resulting in down-regulation of T-lymphocytes proliferation. Alters lipid metabolism by interacting with hepatocellular proteins involved in lipid accumulation and storage. Induces up-regulation of FAS promoter activity, and thereby contributes to the increased triglyceride accumulation in hepatocytes (steatosis). Functionally, forms a heterodimer with envelope glycoprotein E2, which mediates virus attachment to the host cell, virion internalization through clathrin-dependent endocytosis and fusion with host membrane. Fusion with the host cell is most likely mediated by both E1 and E2, through conformational rearrangements of the heterodimer required for fusion rather than a classical class II fusion mechanism. E1/E2 heterodimer binds host apolipoproteins such as APOB and ApoE thereby forming a lipo-viro-particle (LVP). APOE associated to the LVP allows the initial virus attachment to cell surface receptors such as the heparan sulfate proteoglycans (HSPGs), syndecan-1 (SDC1), syndecan-1 (SDC2), the low-density lipoprotein receptor (LDLR) and scavenger receptor class B type I (SCARB1). The cholesterol transfer activity of SCARB1 allows E2 exposure and binding of E2 to SCARB1 and the tetraspanin CD81. E1/E2 heterodimer binding on CD81 activates the epithelial growth factor receptor (EGFR) signaling pathway. Diffusion of the complex E1-E2-EGFR-SCARB1-CD81 to the cell lateral membrane allows further interaction with Claudin 1 (CLDN1) and occludin (OCLN) to finally trigger HCV entry. Forms a heterodimer with envelope glycoprotein E1, which mediates virus attachment to the host cell, virion internalization through clathrin-dependent endocytosis and fusion with host membrane. Fusion with the host cell is most likely mediated by both E1 and E2, through conformational rearrangements of the heterodimer required for fusion rather than a classical class II fusion mechanism. The interaction between envelope glycoprotein E2 and host apolipoprotein E/APOE allows the proper assembly, maturation and infectivity of the viral particles. This interaction is probably promoted via the up-regulation of cellular autophagy by the virus. E1/E2 heterodimer binds host apolipoproteins such as APOB and APOE thereby forming a lipo-viro-particle (LVP). APOE associated to the LVP allows the initial virus attachment to cell surface receptors such as the heparan sulfate proteoglycans (HSPGs), syndecan-1 (SDC1), syndecan-1 (SDC2), the low-density lipoprotein receptor (LDLR) and scavenger receptor class B type I (SCARB1). The cholesterol transfer activity of SCARB1 allows E2 exposure and binding of E2 to SCARB1 and the tetraspanin CD81. E1/E2 heterodimer binding on CD81 activates the epithelial growth factor receptor (EGFR) signaling pathway. Diffusion of the complex E1-E2-EGFR-SCARB1-CD81 to the cell lateral membrane allows further interaction with Claudin 1 (CLDN1) and occludin (OCLN) to finally trigger HCV entry. Inhibits host EIF2AK2/PKR activation, preventing the establishment of an antiviral state. Viral ligand for CD209/DC-SIGN and CLEC4M/DC-SIGNR, which are respectively found on dendritic cells (DCs), and on liver sinusoidal endothelial cells and macrophage-like cells of lymph node sinuses. These interactions allow the capture of circulating HCV particles by these cells and subsequent facilitated transmission to permissive cells such as hepatocytes and lymphocyte subpopulations. The interaction between E2 and host amino acid transporter complex formed by SLC3A2 and SLC7A5/LAT1 may facilitate viral entry into host cell. In terms of biological role, ion channel protein that acts as a viroporin and plays an essential role in the assembly, envelopment and secretion of viral particles. Regulates the host cell secretory pathway, which induces the intracellular retention of viral glycoproteins and favors assembly of viral particles. Creates a pore in acidic organelles and releases Ca(2+) and H(+) in the cytoplasm of infected cells, leading to a productive viral infection. High levels of cytoplasmic Ca(2+) may trigger membrane trafficking and transport of viral ER-associated proteins to viroplasms, sites of viral genome replication. This ionic imbalance induces the assembly of the inflammasome complex, which triggers the maturation of pro-IL-1beta into IL-1beta through the action of caspase-1. Targets also host mitochondria and induces mitochondrial depolarization. In addition of its role as a viroporin, acts as a lipid raft adhesion factor. Its function is as follows. Cysteine protease required for the proteolytic auto-cleavage between the non-structural proteins NS2 and NS3. The N-terminus of NS3 is required for the function of NS2 protease (active region NS2-3). Promotes the initiation of viral particle assembly by mediating the interaction between structural and non-structural proteins. Functionally, displays three enzymatic activities: serine protease with a chymotrypsin-like fold, NTPase and RNA helicase. NS3 serine protease, in association with NS4A, is responsible for the cleavages of NS3-NS4A, NS4A-NS4B, NS4B-NS5A and NS5A-NS5B. The NS3/NS4A complex prevents phosphorylation of host IRF3, thus preventing the establishment of dsRNA induced antiviral state. The NS3/NS4A complex induces host amino acid transporter component SLC3A2, thus contributing to HCV propagation. NS3 RNA helicase binds to RNA and unwinds both dsDNA and dsRNA in the 3' to 5' direction, and likely resolves RNA complicated stable secondary structures in the template strand. Binds a single ATP and catalyzes the unzipping of a single base pair of dsRNA. Inhibits host antiviral proteins TBK1 and IRF3 thereby preventing the establishment of an antiviral state. Cleaves host MAVS/CARDIF thereby preventing the establishment of an antiviral state. Cleaves host TICAM1/TRIF, thereby disrupting TLR3 signaling and preventing the establishment of an antiviral state. Peptide cofactor which forms a non-covalent complex with the N-terminal of NS3 serine protease. The NS3/NS4A complex prevents phosphorylation of host IRF3, thus preventing the establishment of dsRNA induced antiviral state. The NS3/NS4A complex induces host amino acid transporter component SLC3A2, thus contributing to HCV propagation. In terms of biological role, induces a specific membrane alteration that serves as a scaffold for the virus replication complex. This membrane alteration gives rise to the so-called ER-derived membranous web that contains the replication complex. NS4B self-interaction contributes to its function in membranous web formation. Promotes host TRIF protein degradation in a CASP8-dependent manner thereby inhibiting host TLR3-mediated interferon signaling. Disrupts the interaction between STING and TBK1 contributing to the inhibition of interferon signaling. Its function is as follows. Phosphorylated protein that is indispensable for viral replication and assembly. Both hypo- and hyperphosphorylated states are required for the viral life cycle. The hyperphosphorylated form of NS5A is an inhibitor of viral replication. Involved in RNA-binding and especially in binding to the viral genome. Zinc is essential for RNA-binding. Participates in the viral particle production as a result of its interaction with the mature viral core protein. Its interaction with host VAPB may target the viral replication complex to vesicles. Down-regulates viral IRES translation initiation. Mediates interferon resistance, presumably by interacting with and inhibiting host EIF2AK2/PKR. Prevents BIN1-induced apoptosis. Acts as a transcriptional activator of some host genes important for viral replication when localized in the nucleus. Via the interaction with host PACSIN2, modulates lipid droplet formation in order to promote virion assembly. Modulates TNFRSF21/DR6 signaling pathway for viral propagation. Functionally, RNA-dependent RNA polymerase that performs primer-template recognition and RNA synthesis during viral replication. Initiates RNA transcription/replication at a flavin adenine dinucleotide (FAD), resulting in a 5'- FAD cap on viral RNAs. In this way, recognition of viral 5' RNA by host pattern recognition receptors can be bypassed, thereby evading activation of antiviral pathways. The polypeptide is Genome polyprotein (Homo sapiens (Human)).